Consider the following 70-residue polypeptide: Myotoxin (70 aa).

Positions 1-22 (MKILYLLFAFLFLAFLSEPGNA) are cleaved as a signal peptide. Disulfide bonds link cysteine 26-cysteine 58, cysteine 33-cysteine 52, and cysteine 40-cysteine 59.

It belongs to the crotamine-myotoxin family. As to quaternary structure, monomer. As to expression, expressed by the venom gland.

The protein resides in the secreted. Its function is as follows. Cationic peptide that possesses multiple functions. It acts as a cell-penetrating peptide (CPP), and as a potent voltage-gated potassium channel (Kv) inhibitor. It exhibits antimicrobial activities, hind limb paralysis, and severe muscle necrosis by a non-enzymatic mechanism. The sequence is that of Myotoxin from Crotalus adamanteus (Eastern diamondback rattlesnake).